A 338-amino-acid chain; its full sequence is Tetraacyldisaccharide 4'-kinase (338 aa).

65–72 (TVGGTGKT) contributes to the ATP binding site.

Belongs to the LpxK family.

It carries out the reaction a lipid A disaccharide + ATP = a lipid IVA + ADP + H(+). Its pathway is glycolipid biosynthesis; lipid IV(A) biosynthesis; lipid IV(A) from (3R)-3-hydroxytetradecanoyl-[acyl-carrier-protein] and UDP-N-acetyl-alpha-D-glucosamine: step 6/6. Functionally, transfers the gamma-phosphate of ATP to the 4'-position of a tetraacyldisaccharide 1-phosphate intermediate (termed DS-1-P) to form tetraacyldisaccharide 1,4'-bis-phosphate (lipid IVA). The polypeptide is Tetraacyldisaccharide 4'-kinase (Paraburkholderia xenovorans (strain LB400)).